The sequence spans 813 residues: Leucine--tRNA ligase (813 aa).

Positions 41–51 (PYPSGTLHMGH) match the 'HIGH' region motif. Residues 575–579 (KMSKS) carry the 'KMSKS' region motif. Position 578 (Lys578) interacts with ATP.

The protein belongs to the class-I aminoacyl-tRNA synthetase family.

The protein localises to the cytoplasm. The catalysed reaction is tRNA(Leu) + L-leucine + ATP = L-leucyl-tRNA(Leu) + AMP + diphosphate. The chain is Leucine--tRNA ligase from Francisella tularensis subsp. tularensis (strain WY96-3418).